The chain runs to 376 residues: Peroxisomal membrane protein PEX14 (376 aa).

Positions Met-1–Gln-12 are enriched in polar residues. A disordered region spans residues Met-1–Pro-24. N-acetylalanine is present on Ala-2. The Peroxisomal portion of the chain corresponds to Ala-2 to Asp-108. Lys-34 carries the N6-acetyllysine modification. The tract at residues Ser-70 to Arg-102 is disordered. Over residues Pro-88–Tyr-99 the composition is skewed to pro residues. A helical membrane pass occupies residues Tyr-109–Tyr-127. Residues Lys-128–Asp-376 lie on the Cytoplasmic side of the membrane. The interval Pro-230 to Asp-376 is disordered. At Ser-232 the chain carries Phosphoserine. Composition is skewed to low complexity over residues Ser-247 to His-259 and Ser-265 to Ser-275. Phosphoserine is present on residues Ser-282 and Ser-334. Positions Lys-323 to Val-341 are enriched in acidic residues. Basic and acidic residues predominate over residues Gln-359–Asp-376.

Belongs to the peroxin-14 family. Interacts with PEX13; forming the PEX13-PEX14 docking complex. Interacts with PEX5 (via WxxxF/Y motifs). Interacts with PEX19. Interacts with tubulin.

It localises to the peroxisome membrane. Component of the PEX13-PEX14 docking complex, a translocon channel that specifically mediates the import of peroxisomal cargo proteins bound to PEX5 receptor. The PEX13-PEX14 docking complex forms a large import pore which can be opened to a diameter of about 9 nm. Mechanistically, PEX5 receptor along with cargo proteins associates with the PEX14 subunit of the PEX13-PEX14 docking complex in the cytosol, leading to the insertion of the receptor into the organelle membrane with the concomitant translocation of the cargo into the peroxisome matrix. Plays a key role for peroxisome movement through a direct interaction with tubulin. In Mus musculus (Mouse), this protein is Peroxisomal membrane protein PEX14.